A 181-amino-acid polypeptide reads, in one-letter code: Ribosome maturation factor RimM (181 aa).

One can recognise a PRC barrel domain in the interval Glu-103 to Phe-181.

It belongs to the RimM family. In terms of assembly, binds ribosomal protein uS19.

The protein localises to the cytoplasm. Functionally, an accessory protein needed during the final step in the assembly of 30S ribosomal subunit, possibly for assembly of the head region. Essential for efficient processing of 16S rRNA. May be needed both before and after RbfA during the maturation of 16S rRNA. It has affinity for free ribosomal 30S subunits but not for 70S ribosomes. In Marinomonas sp. (strain MWYL1), this protein is Ribosome maturation factor RimM.